The sequence spans 323 residues: Beta-ketoacyl-[acyl-carrier-protein] synthase III (323 aa).

Active-site residues include cysteine 113 and histidine 250. The tract at residues 251–255 (QANRR) is ACP-binding. Asparagine 280 is a catalytic residue.

This sequence belongs to the thiolase-like superfamily. FabH family. Homodimer.

It localises to the cytoplasm. The enzyme catalyses malonyl-[ACP] + acetyl-CoA + H(+) = 3-oxobutanoyl-[ACP] + CO2 + CoA. Its pathway is lipid metabolism; fatty acid biosynthesis. Functionally, catalyzes the condensation reaction of fatty acid synthesis by the addition to an acyl acceptor of two carbons from malonyl-ACP. Catalyzes the first condensation reaction which initiates fatty acid synthesis and may therefore play a role in governing the total rate of fatty acid production. Possesses both acetoacetyl-ACP synthase and acetyl transacylase activities. Its substrate specificity determines the biosynthesis of branched-chain and/or straight-chain of fatty acids. This Sinorhizobium medicae (strain WSM419) (Ensifer medicae) protein is Beta-ketoacyl-[acyl-carrier-protein] synthase III.